The following is a 316-amino-acid chain: Epoxide hydrolase 3 (316 aa).

Residues 25–302 (PVVLLLHGFP…ACHFINQERP (278 aa)) enclose the AB hydrolase-1 domain. Asp-101 acts as the Nucleophile in catalysis. Tyr-150 contributes to the an epoxide binding site. Residue Tyr-230 is the Proton donor of the active site. The active-site Proton acceptor is the His-295.

This sequence belongs to the AB hydrolase superfamily. Epoxide hydrolase family. As to quaternary structure, homodimer. In terms of tissue distribution, highly expressed in young fruits 15 days after anthesis (15-DAA).

The catalysed reaction is an epoxide + H2O = an ethanediol. It catalyses the reaction (24S)-24,25-epoxycucurbitadienol + H2O = (24R)-24,25-dihydroxycucurbitadienol. Its pathway is secondary metabolite biosynthesis; terpenoid biosynthesis. Its function is as follows. Epoxide hydrolase involved in the biosynthesis of cucurbitacin and mogroside tetracyclic triterpene natural products (e.g. siamenoside I and mogrosides IV, V and VI). Cucurbitacins have cytotoxic properties and exhibit deterrent taste as a defense barrier against herbivores. Mogrosides are nonsugar highly oxygenated compounds used as high-intensity zero-calorie sweeteners; they also possess pharmacological properties such as regulating immunity, lowering blood sugar and lipid levels, protecting the liver, and acting as antioxidants and antitumor agents. Catalyzes the hydrolysis of aromatic epoxide-containing substrates, such as the conversion of 24,25-epoxycucurbitadienol to 24,25-dihydroxycucurbitadienol. The polypeptide is Epoxide hydrolase 3 (Siraitia grosvenorii (Monk's fruit)).